The chain runs to 400 residues: Probable S-adenosylmethionine synthase (400 aa).

Residue 135–140 (KPGSKD) coordinates ATP.

The protein belongs to the AdoMet synthase 2 family. Mg(2+) serves as cofactor.

The catalysed reaction is L-methionine + ATP + H2O = S-adenosyl-L-methionine + phosphate + diphosphate. It participates in amino-acid biosynthesis; S-adenosyl-L-methionine biosynthesis; S-adenosyl-L-methionine from L-methionine: step 1/1. Functionally, catalyzes the formation of S-adenosylmethionine from methionine and ATP. This is Probable S-adenosylmethionine synthase (mat) from Aquifex aeolicus (strain VF5).